The primary structure comprises 266 residues: MARSPRIRIKDNDKAEYARLVKNTKAKIARTKKKYGVDLTAEIDIPDLDSFETRAQFNKWKEQASSFTNRANMRYQFEKNAYGVVASKAKIAEIERNTKEVQRLVDEKIKAMKDKEYYAGGKPQGTIEQRIAMTSPAHVTGINRPHDFDFSKVRSYSRLRTLEESMEMRTDPQYYEKKMIQLQLNFIKSVEGSFNSFDAADELIEELKKIPPDDFYELFLRISEISFEEFDSEGNTVENVEGNVYKILSYLEQYRRGDFDLSLKGF.

A disordered region spans residues 1 to 73 (MARSPRIRIK…ASSFTNRANM (73 aa)). Positions 25–34 (KAKIARTKKK) match the Nuclear localization signal motif. Residues 74–172 (RYQFEKNAYG…EESMEMRTDP (99 aa)) form an intermediate; makes extensive contacts with the phage DNA polymerase region. The stretch at 86–113 (ASKAKIAEIERNTKEVQRLVDEKIKAMK) forms a coiled coil. A priming region spans residues 173–266 (QYYEKKMIQL…GDFDLSLKGF (94 aa)). Serine 232 is modified (O-(5'-phospho-DNA)-serine). The segment at 256-258 (RGD) is interaction with the viral DNA polymerase.

This sequence belongs to the phi29likevirus DNA terminal protein family. As to quaternary structure, interacts with the viral polymerase; this interaction allows the initiation of TP-primed DNA replication at both viral DNA ends. Binds to ssDNA. Interacts with the replication protein p1. Part of a DNA-gp3-gp16 complex.

It is found in the virion. The protein resides in the host nucleus. In terms of biological role, acts as a primer for DNA elongation during viral genomic replication. Acts as the small terminase protein during packaging. Recruits the phage DNA polymerase to the bacterial nucleoid. Primer terminal protein (TP) is covalently linked to the 5'-ends of both strands of the genome through a phosphodiester bond between the beta-hydroxyl group of a serine residue and the 5'-phosphate of the terminal deoxyadenylate (dAMP). To start replication, the DNA polymerase forms a heterodimer with a free TP that recognizes the replication origins at both 5' ends of the linear chromosome, and initiates replication using as primer the OH-group of Ser-232 of the TP. Since the polymerase initiates the replication on the second thymine, the TP-dAMP initiation product slides backwards to recover the template information of the first nucleotide. Functionally, hydrolyzes host peptidoglycans during virus entry. The polypeptide is Primer terminal protein (3) (Bacillus phage phi29 (Bacteriophage phi-29)).